An 87-amino-acid polypeptide reads, in one-letter code: Probable acyl carrier protein PigG (87 aa).

One can recognise a Carrier domain in the interval 1–78 (MLESKLINHI…SMVALVQRLK (78 aa)). Serine 36 is subject to O-(pantetheine 4'-phosphoryl)serine.

It functions in the pathway antibiotic biosynthesis; prodigiosin biosynthesis. Functionally, involved in the biosynthesis of 4-methoxy-2,2'-bipyrrole-5-carbaldehyde (MBC), one of the terminal products involved in the biosynthesis of the red antibiotic prodigiosin (Pig). Carrier of the L-prolyl group transferred from L-prolyl-AMP by PigI. The sequence is that of Probable acyl carrier protein PigG from Serratia sp. (strain ATCC 39006) (Prodigiosinella confusarubida).